The sequence spans 186 residues: Ribosome maturation factor RimM (186 aa).

The 76-residue stretch at 93–168 (EDDFYLVDLI…VLIDPPQEEN (76 aa)) folds into the PRC barrel domain. The segment at 163–186 (PPQEENAPEFGRNELGHDDGGEAA) is disordered. Residues 173–186 (GRNELGHDDGGEAA) are compositionally biased toward basic and acidic residues.

The protein belongs to the RimM family. In terms of assembly, binds ribosomal protein uS19.

The protein localises to the cytoplasm. In terms of biological role, an accessory protein needed during the final step in the assembly of 30S ribosomal subunit, possibly for assembly of the head region. Essential for efficient processing of 16S rRNA. May be needed both before and after RbfA during the maturation of 16S rRNA. It has affinity for free ribosomal 30S subunits but not for 70S ribosomes. In Granulibacter bethesdensis (strain ATCC BAA-1260 / CGDNIH1), this protein is Ribosome maturation factor RimM.